The sequence spans 133 residues: ATP synthase epsilon chain, chloroplastic (133 aa).

The protein belongs to the ATPase epsilon chain family. In terms of assembly, F-type ATPases have 2 components, CF(1) - the catalytic core - and CF(0) - the membrane proton channel. CF(1) has five subunits: alpha(3), beta(3), gamma(1), delta(1), epsilon(1). CF(0) has three main subunits: a, b and c.

Its subcellular location is the plastid. It is found in the chloroplast thylakoid membrane. Produces ATP from ADP in the presence of a proton gradient across the membrane. This is ATP synthase epsilon chain, chloroplastic from Piper cenocladum (Ant piper).